A 595-amino-acid chain; its full sequence is Adenine deaminase 2 (595 aa).

It belongs to the metallo-dependent hydrolases superfamily. Adenine deaminase family. It depends on Mn(2+) as a cofactor.

The enzyme catalyses adenine + H2O + H(+) = hypoxanthine + NH4(+). This chain is Adenine deaminase 2, found in Rhizobium etli (strain ATCC 51251 / DSM 11541 / JCM 21823 / NBRC 15573 / CFN 42).